A 112-amino-acid polypeptide reads, in one-letter code: Prostatic steroid-binding protein C2 (112 aa).

The signal sequence occupies residues 1–20; sequence MRLSLCLLTILVVCCYEANG. Gln21 is subject to Pyrrolidone carboxylic acid.

This sequence belongs to the secretoglobin family. Lipophilin subfamily. Prostatein is composed of three different peptides called C1, C2 and C3. These form covalent C1:C3 (F) and C2:C3 (S) heterodimers whose noncovalent association forms tetrameric (C1:C3/C3:C2) prostatein molecules. In terms of processing, linked by three disulfide bonds to C3. Post-translationally, the N-terminus is blocked.

The protein localises to the secreted. In terms of biological role, part of prostatein which is the major secretory glycoprotein of ventral prostate gland. In Rattus norvegicus (Rat), this protein is Prostatic steroid-binding protein C2 (Psbpc2).